The chain runs to 243 residues: MKFHSKLQEGIFLKRYKRFFADIEFQGQQVTAHVPNTGSLKSVNNPGQHCLFSESTNPERKLKYTLEMIKSPTGSWVGVNTATPNTVVRETLHHVVGHKKEVIGGFAHWAAFDEVKPEYKISAETRLDFALKKNNSDKMHFIEVKNVTLAEEGTAKFPDAVTERGQKHLRELMALMEQGHTAEIVFTIQRHDCGSFSPADDIDPEYGRLLREAYQKGLRVSPFVLDLTPESVELSETVLPLKM.

The protein belongs to the SfsA family.

This chain is Sugar fermentation stimulation protein homolog, found in Bdellovibrio bacteriovorus (strain ATCC 15356 / DSM 50701 / NCIMB 9529 / HD100).